The sequence spans 329 residues: Transposable element Tc3 transposase (329 aa).

Residues 2-135 (PRGSALSDTE…LEFAKNNMGT (134 aa)) mediate DNA binding.

Belongs to the transposase 5 family. As to quaternary structure, homodimer or homotetramer.

The protein localises to the nucleus. Its function is as follows. Binds specifically to the terminal nucleotides of the TC3 inverted repeat. Its expression results in frequent excision and transposition of endogenous TC3 elements. TC3 transposase acts by making double strand breaks at the ends of TC3 element. The excised element would then be inserted into a target sequence. This chain is Transposable element Tc3 transposase (tc3a), found in Caenorhabditis elegans.